The primary structure comprises 1083 residues: MRTTPTFPTKTFKPTAMALAVATTLSACLGGGGGGTSAPDFNAGGTGIGSNSRATTAKSAAVSYAGIKNEMCKDRSMLCAGRDDVAVTDRDAKINRPPPPNLHTGDFPNPNDAYKNLINLKPAIEAGYTGRGVEVGIVDTGESVGSISFPELYGRKEHGYNENYKNYTAYMRKEAPEDGGGKDIEASFDDEAVIETEAKPTDIRHVKEIGHIDLVSHIIGGRSVDGRPAGGIAPDATLHIMNTNDGTKNEMMVAAIRNAWVKLGERGVRIVNNSFGTTSRAGTADLFQIANSEEQYRQALLDYSGGDKTDEGIRLMQQSDYGNLSYHIRNKNMLFIFSTGNDAQAQPNTYALLPFYEKDAQKGIITVAGVDRSGEKFKREMYGEPGTEPLEYGSNHCGITAMWCLSAPYEASVRFTRTNPIQIAGTSFSAPIVTGTAALLLQKYPWMSNDNLRTTLLTTAQDIGAVGVDSKFGWGLLDAGKAMNGPASFPFGDFTADTKGTSDIAYSFRNDISGTGGLIKKGGSQLQLHGNNTYTGKTIIEGGSLVLYGNNKSDMRVETKGALIYNGAASGGSLNSDGIVYLADTDQSGANETVHIKGSLQLDGKGTLYTRLGKLLKVDGTAIIGGKLYMSARGKGAGYLNSTGRRVPFLSAAKIGQDYSFFTNIETDGGLLASLDSVEKTAGSEGDTLSYYVRRGNAARTASAAAHSAPAGLKHAVEQGGSNLENLMVELDASESSATPETVETAAADRTDMPGIRPYGATFRAAAAVQHANAADGVRIFNSLAATVYADSTAAHADMQGRRLKAVSDGLDHNGTGLRVIAQTQQDGGTWEQGGVEGKMRGSTQTVGIAAKTGENTTAAATLGMGRSTWSENSANAKTDSISLFAGIRHDAGDIGYLKGLFSYGRYKNSISRSTGADEHAEGSVNGTLMQLGALGGVNVPFAATGDLTVEGGLRYDLLKQDAFAEKGSALGWSGNSLTEGTLVGLAGLKLSQPLSDKAVLFATAGVERDLNGRDYTVTGGFTGATAATGKTGARNMPHTRLVAGLGADVEFGNGWNGLARYSYAGSKQYGNHSGRVGVGYRF.

The N-terminal stretch at 1–27 (MRTTPTFPTKTFKPTAMALAVATTLSA) is a signal peptide. A lipid anchor (N-palmitoyl cysteine) is attached at Cys-28. A lipid anchor (S-diacylglycerol cysteine) is attached at Cys-28. Residues 111–483 (NDAYKNLINL…WGLLDAGKAM (373 aa)) enclose the Peptidase S8 domain. Residues Asp-139, His-211, and Ser-427 each act as charge relay system in the active site. The Autotransporter domain occupies 809–1083 (DGLDHNGTGL…SGRVGVGYRF (275 aa)). A run of 12 beta stranded transmembrane segments spans residues 819–828 (RVIAQTQQDG), 844–852 (TQTVGIAAK), 858–866 (TAAATLGMG), 883–891 (SLFAGIRHD), 897–906 (YLKGLFSYGR), 931–941 (QLGALGGVNVP), 948–958 (LTVEGGLRYDL), 984–994 (VGLAGLKLSQP), 1000–1010 (VLFATAGVERD), 1041–1052 (RLVAGLGADVEF), 1057–1066 (NGLARYSYAG), and 1074–1083 (SGRVGVGYRF).

This sequence belongs to the peptidase S8 family. Post-translationally, a fusion protein of the first 44 residues with beta-lactamase is lipidated in E.coli, strongly suggesting this is a lipoprotein in situ. The lipidated form is briefly retained on the cell surface which allows it to process its endogenous substrates on the cell surface before the passenger domain is released into the medium.

It localises to the cell outer membrane. The protein resides in the cell surface. The protein localises to the secreted. Its function is as follows. Major human immunogenic protein. Autotransporter with a secreted protease domain involved in processing other autotransporter proteins including App and IgA. Probably autoprocesses to release the about 70 kDa passenger domain. Processes the lactoferrin receptor lipoprotein subunit (LbpB) extracellularly, releasing it from the cell surface. LbpB release protects bacteria against complement-mediated killing by anti-LbpB antibodies. Processes NHBA. Lipidation slows its auto-processing, probably allowing it to act on endogenous substrates on the cell surface before the passenger domain is released into the medium. The C-terminal beta-barrel domain inserts into the outer membrane where it probably exports the N-terminal passenger domain. Both the cell surface protein (Neisserial autotransporter lipoprotein NalP) and the passenger domain cleave human (host) complement factor C3, generating a shorter alpha chain and a longer beta chain than normal. Functionally, plays a role in extracellular-DNA (eDNA) mediated biofilm formation. In some strains (including cc32 strain H44/76 but not cc11 strain B16B6) eDNA stimulates biofilm formation. When NalP is not expressed (and no longer processes NHBA or IgA) biofilm formation increases. This is probably because the number of positively charged, DNA-binding peptides on the cell surface rises, resulting in increased biofilm formation. Cleaves human (host) complement factor C3, generating a shorter alpha chain and a longer beta chain than normal. Does not act on mouse or rabbit C3. Cleavage causes C3b degradation by human CFI and CFH, decreases deposition of C3b on the bacteria surface and probably facilitates complement escape. In Neisseria meningitidis serogroup B / serotype 15 (strain H44/76), this protein is Neisserial autotransporter lipoprotein NalP.